Reading from the N-terminus, the 81-residue chain is Putative membrane protein insertion efficiency factor (81 aa).

The segment at 61–81 (NDGGYDPVPPAPSSRTSSIAE) is disordered.

Belongs to the UPF0161 family.

Its subcellular location is the cell inner membrane. Its function is as follows. Could be involved in insertion of integral membrane proteins into the membrane. The chain is Putative membrane protein insertion efficiency factor from Pseudomonas putida (strain ATCC 47054 / DSM 6125 / CFBP 8728 / NCIMB 11950 / KT2440).